The chain runs to 105 residues: Transmembrane protein 273 (105 aa).

The N-terminal stretch at 1-19 (MNLGVSMLRILFLLDVGGA) is a signal peptide. Topologically, residues 20–38 (QVLATGKTPGAEIDFKYAL) are extracellular. Residues 39–59 (IGTAVGVAISAGFLALKICMI) form a helical membrane-spanning segment. Topologically, residues 60 to 105 (RRHLFDDDSSDLKSTPGGLSDTIPLKKRAPRRNHNFSKRDAQVIEL) are cytoplasmic.

Its subcellular location is the membrane. This chain is Transmembrane protein 273, found in Homo sapiens (Human).